The chain runs to 290 residues: Sodium/potassium-transporting ATPase subunit beta-2 (290 aa).

Residues 1-39 are Cytoplasmic-facing; the sequence is MVIQKEKKSCGQVVEEWKEFVWNPRTHQFMGRTGTSWAF. A helical; Signal-anchor for type II membrane protein membrane pass occupies residues 40-67; that stretch reads ILLFYLVFYGFLTAMFTLTMWVMLQTVS. Residues 68-290 are Extracellular-facing; sequence DHTPKYQDRL…VAFKLRINKT (223 aa). 2 N-linked (GlcNAc...) asparagine glycosylation sites follow: asparagine 96 and asparagine 118. A disulfide bond links cysteine 129 and cysteine 150. N-linked (GlcNAc...) asparagine glycans are attached at residues asparagine 153 and asparagine 159. An intrachain disulfide couples cysteine 160 to cysteine 177. Asparagine 193, asparagine 197, and asparagine 238 each carry an N-linked (GlcNAc...) asparagine glycan. An immunoglobulin-like region spans residues 193–290; it reads NQSMNVTCAG…VAFKLRINKT (98 aa). A disulfide bridge connects residues cysteine 200 and cysteine 261.

Belongs to the X(+)/potassium ATPases subunit beta family. The sodium/potassium-transporting ATPase is composed of a catalytic alpha subunit, an auxiliary non-catalytic beta subunit and an additional regulatory subunit. Interacts with BSG.

The protein resides in the cell membrane. In terms of biological role, this is the non-catalytic component of the active enzyme, which catalyzes the hydrolysis of ATP coupled with the exchange of Na(+) and K(+) ions across the plasma membrane. The exact function of the beta-2 subunit is not known. Functionally, mediates cell adhesion of neurons and astrocytes, and promotes neurite outgrowth. The polypeptide is Sodium/potassium-transporting ATPase subunit beta-2 (ATP1B2) (Ochotona curzoniae (Black-lipped pika)).